A 628-amino-acid chain; its full sequence is Biosynthetic arginine decarboxylase (628 aa).

Residue Lys-99 is modified to N6-(pyridoxal phosphate)lysine. Residue 279–289 (VDVGGGLGIDY) coordinates substrate.

The protein belongs to the Orn/Lys/Arg decarboxylase class-II family. SpeA subfamily. It depends on Mg(2+) as a cofactor. Pyridoxal 5'-phosphate serves as cofactor.

The catalysed reaction is L-arginine + H(+) = agmatine + CO2. The protein operates within amine and polyamine biosynthesis; agmatine biosynthesis; agmatine from L-arginine: step 1/1. In terms of biological role, catalyzes the biosynthesis of agmatine from arginine. This Xylella fastidiosa (strain M12) protein is Biosynthetic arginine decarboxylase.